Here is a 278-residue protein sequence, read N- to C-terminus: Anamorsin homolog (278 aa).

An N-terminal SAM-like domain region spans residues 1–147 (MESVSHLVSN…EIGSSAALPF (147 aa)). The interval 147–191 (FANKISLGGNSKMETAKMWTLSSQDFVDDDIDIIDENTLIEEDDF) is linker. Positions 204, 214, 217, and 219 each coordinate [2Fe-2S] cluster. The fe-S binding site A stretch occupies residues 204-219 (CDSAKKKRKACKNCSC). The [4Fe-4S] cluster site is built by Cys-239, Cys-242, Cys-250, and Cys-253. 2 short sequence motifs (cx2C motif) span residues 239–242 (CGSC) and 250–253 (CSSC). The interval 239–253 (CGSCYLGDAFRCSSC) is fe-S binding site B.

It belongs to the anamorsin family. In terms of assembly, monomer. It depends on [2Fe-2S] cluster as a cofactor. [4Fe-4S] cluster serves as cofactor.

The protein resides in the cytoplasm. It is found in the mitochondrion intermembrane space. Its function is as follows. Component of the cytosolic iron-sulfur (Fe-S) protein assembly (CIA) machinery. Required for the maturation of extramitochondrial Fe-S proteins. Part of an electron transfer chain functioning in an early step of cytosolic Fe-S biogenesis, facilitating the de novo assembly of a [4Fe-4S] cluster on the cytosolic Fe-S scaffold complex. Electrons are transferred from NADPH via a FAD- and FMN-containing diflavin oxidoreductase. Together with the diflavin oxidoreductase, also required for the assembly of the diferric tyrosyl radical cofactor of ribonucleotide reductase (RNR), probably by providing electrons for reduction during radical cofactor maturation in the catalytic small subunit. The polypeptide is Anamorsin homolog (Trichoplax adhaerens (Trichoplax reptans)).